Here is a 156-residue protein sequence, read N- to C-terminus: Small ribosomal subunit protein uS7 (156 aa).

This sequence belongs to the universal ribosomal protein uS7 family. As to quaternary structure, part of the 30S ribosomal subunit. Contacts proteins S9 and S11.

Its function is as follows. One of the primary rRNA binding proteins, it binds directly to 16S rRNA where it nucleates assembly of the head domain of the 30S subunit. Is located at the subunit interface close to the decoding center, probably blocks exit of the E-site tRNA. This Pelagibacter ubique (strain HTCC1062) protein is Small ribosomal subunit protein uS7.